A 144-amino-acid polypeptide reads, in one-letter code: Large ribosomal subunit protein uL11 (144 aa).

The protein belongs to the universal ribosomal protein uL11 family. Part of the ribosomal stalk of the 50S ribosomal subunit. Interacts with L10 and the large rRNA to form the base of the stalk. L10 forms an elongated spine to which L12 dimers bind in a sequential fashion forming a multimeric L10(L12)X complex. In terms of processing, one or more lysine residues are methylated.

Forms part of the ribosomal stalk which helps the ribosome interact with GTP-bound translation factors. The protein is Large ribosomal subunit protein uL11 of Granulibacter bethesdensis (strain ATCC BAA-1260 / CGDNIH1).